Reading from the N-terminus, the 242-residue chain is Large ribosomal subunit protein uL2 (242 aa).

The disordered stretch occupies residues V201–K242. The segment covering S220–K242 has biased composition (basic residues).

This sequence belongs to the universal ribosomal protein uL2 family. In terms of assembly, part of the 50S ribosomal subunit. Forms a bridge to the 30S subunit in the 70S ribosome.

Functionally, one of the primary rRNA binding proteins. Required for association of the 30S and 50S subunits to form the 70S ribosome, for tRNA binding and peptide bond formation. It has been suggested to have peptidyltransferase activity; this is somewhat controversial. Makes several contacts with the 16S rRNA in the 70S ribosome. The sequence is that of Large ribosomal subunit protein uL2 from Methanocaldococcus jannaschii (strain ATCC 43067 / DSM 2661 / JAL-1 / JCM 10045 / NBRC 100440) (Methanococcus jannaschii).